The sequence spans 391 residues: 3-ketoacyl-CoA thiolase (391 aa).

The active-site Acyl-thioester intermediate is the Cys95. Active-site proton acceptor residues include His347 and Cys377.

It belongs to the thiolase-like superfamily. Thiolase family. As to quaternary structure, heterotetramer of two alpha chains (FadB) and two beta chains (FadA).

It localises to the cytoplasm. It catalyses the reaction an acyl-CoA + acetyl-CoA = a 3-oxoacyl-CoA + CoA. It participates in lipid metabolism; fatty acid beta-oxidation. Its function is as follows. Catalyzes the final step of fatty acid oxidation in which acetyl-CoA is released and the CoA ester of a fatty acid two carbons shorter is formed. The sequence is that of 3-ketoacyl-CoA thiolase from Vibrio parahaemolyticus serotype O3:K6 (strain RIMD 2210633).